The following is a 147-amino-acid chain: Hemoglobin subunit beta (147 aa).

N-acetylvaline is present on V2. The Globin domain occupies 3–147 (HLTGEEKGIV…VATALAHKYH (145 aa)). At T13 the chain carries Phosphothreonine. Phosphoserine is present on S45. Residue K60 is modified to N6-acetyllysine. Heme b is bound at residue H64. K83 is modified (N6-acetyllysine). H93 contributes to the heme b binding site. At C94 the chain carries S-nitrosocysteine. The residue at position 145 (K145) is an N6-acetyllysine.

The protein belongs to the globin family. In terms of assembly, heterotetramer of two alpha chains and two beta chains. In terms of tissue distribution, red blood cells.

Its function is as follows. Involved in oxygen transport from the lung to the various peripheral tissues. This chain is Hemoglobin subunit beta (HBB), found in Rhinolophus ferrumequinum (Greater horseshoe bat).